Reading from the N-terminus, the 70-residue chain is U2-agatoxin-Ao1l (70 aa).

The signal sequence occupies residues 1–20 (MRAIISLLLISAMVFSIIEA). Positions 21 to 34 (VPEEEGLQLSEDER) are excised as a propeptide. 3 cysteine pairs are disulfide-bonded: Cys37-Cys53, Cys44-Cys58, and Cys52-Cys68. Residue Leu69 is modified to Leucine amide.

It belongs to the neurotoxin 01 (U2-agtx) family. In terms of tissue distribution, expressed by the venom gland.

Its subcellular location is the secreted. In terms of biological role, insect active toxin causing rapid but reversible paralysis in crickets. No activity shown in mammals. Does not show effect on mammalian voltage-gated calcium channels. This chain is U2-agatoxin-Ao1l, found in Agelena orientalis (Funnel-web spider).